Consider the following 242-residue polypeptide: Protein unc-119 homolog B-A (242 aa).

The segment covering 1–20 (MSGSKREAALTGQPKDERKK) has biased composition (basic and acidic residues). Residues 1–49 (MSGSKREAALTGQPKDERKKSGGGVINRLKARRVQGKESGTSDQSSVTP) are disordered. Polar residues predominate over residues 38-48 (ESGTSDQSSVT). Tyrosine 133 serves as a coordination point for tetradecanoate.

This sequence belongs to the PDE6D/unc-119 family.

Myristoyl-binding protein that acts as a cargo adapter: specifically binds the myristoyl moiety of a subset of N-terminally myristoylated proteins and is required for their localization. Plays a key role in localization of proteins to the primary cilium membrane. This Xenopus laevis (African clawed frog) protein is Protein unc-119 homolog B-A (unc119b-a).